The sequence spans 308 residues: Glycosyltransferase 6 domain-containing protein 1 (308 aa).

Residues 1-6 lie on the Cytoplasmic side of the membrane; sequence MNSKRM. Residues 7–23 form a helical; Signal-anchor for type II membrane protein membrane-spanning segment; sequence LLLVLFAFSLMLVERYF. At 24–308 the chain is on the lumenal side; that stretch reads RNHQVEELRL…KVAHDSHRKL (285 aa). The N-linked (GlcNAc...) asparagine glycan is linked to Asn74. Substrate-binding positions include 82-87, 173-175, and 195-198; these read FATGRF, AVN, and HAWW. The active-site Nucleophile is Glu263.

This sequence belongs to the glycosyltransferase 6 family. Requires Mn(2+) as cofactor.

Its subcellular location is the membrane. This is Glycosyltransferase 6 domain-containing protein 1 (GLT6D1) from Macaca fascicularis (Crab-eating macaque).